Reading from the N-terminus, the 275-residue chain is MKTSVFIAIFNLLVCALAYTDLTGSIKINDKKITLGEFNTQEVKQLTINSPKDIIEIDLKSKDIKGKPEQIMVSLADVKNPAISTHYVPVVKESKIKLNIKALSIPEVLKTKDKLVLTIVIADSKSKNNMIRRLVEVLPSPEFKSTSRYQAKPRIGIQPEIHHIFREDERTVNPIVPVVFIIAAFTLLLGLFGSWVGFIGIDNLFRTFKTISKVQLLHNVSFLISVLGFELNFVKYYLGQSIFTTLFYGFILSIPCVYFGVSVLRSLAKNRALGK.

Positions 1–18 are cleaved as a signal peptide; the sequence is MKTSVFIAIFNLLVCALA. The next 3 helical transmembrane spans lie at 179–199, 214–234, and 241–261; these read VFII…VGFI, VQLL…LNFV, and SIFT…YFGV.

This sequence belongs to the SWP1 family. In terms of assembly, component of the oligosaccharyltransferase (OST) complex.

Its subcellular location is the endoplasmic reticulum membrane. It functions in the pathway protein modification; protein glycosylation. Functionally, subunit of the oligosaccharyl transferase (OST) complex that catalyzes the initial transfer of a defined glycan (Glc(3)Man(9)GlcNAc(2) in eukaryotes) from the lipid carrier dolichol-pyrophosphate to an asparagine residue within an Asn-X-Ser/Thr consensus motif in nascent polypeptide chains, the first step in protein N-glycosylation. N-glycosylation occurs cotranslationally and the complex associates with the Sec61 complex at the channel-forming translocon complex that mediates protein translocation across the endoplasmic reticulum (ER). All subunits are required for a maximal enzyme activity. Plays a role in cell wall integrity and in engulfment by macrophages. The polypeptide is Dolichyl-diphosphooligosaccharide--protein glycosyltransferase subunit delta (Candida albicans (strain SC5314 / ATCC MYA-2876) (Yeast)).